Consider the following 215-residue polypeptide: Pyridoxine/pyridoxamine 5'-phosphate oxidase (215 aa).

Substrate-binding positions include 11–14 and Lys69; that span reads RRDY. FMN-binding positions include 64 to 69, 79 to 80, Lys86, and Gln108; these read RVVLLK and YT. Tyr126, Arg130, and Ser134 together coordinate substrate. Residues 143-144 and Trp188 contribute to the FMN site; that span reads QS. Position 194-196 (194-196) interacts with substrate; sequence RLH. Residue Arg198 coordinates FMN.

This sequence belongs to the pyridoxamine 5'-phosphate oxidase family. As to quaternary structure, homodimer. The cofactor is FMN.

It carries out the reaction pyridoxamine 5'-phosphate + O2 + H2O = pyridoxal 5'-phosphate + H2O2 + NH4(+). It catalyses the reaction pyridoxine 5'-phosphate + O2 = pyridoxal 5'-phosphate + H2O2. It participates in cofactor metabolism; pyridoxal 5'-phosphate salvage; pyridoxal 5'-phosphate from pyridoxamine 5'-phosphate: step 1/1. Its pathway is cofactor metabolism; pyridoxal 5'-phosphate salvage; pyridoxal 5'-phosphate from pyridoxine 5'-phosphate: step 1/1. Functionally, catalyzes the oxidation of either pyridoxine 5'-phosphate (PNP) or pyridoxamine 5'-phosphate (PMP) into pyridoxal 5'-phosphate (PLP). This chain is Pyridoxine/pyridoxamine 5'-phosphate oxidase, found in Legionella pneumophila (strain Lens).